A 622-amino-acid chain; its full sequence is MSSEHKRSLPAVTLAAIGVVYGDIGTSPLYTLRECLSGQFGFGVEPDSVFGFLSLIFWLLVLVVSLKYLTYVMRADNAGEGGILTLMSLAGRNTSDRMTSVLVIMGLIGGSFFYGEVVITPAISVMSAMEGLEIAAPSMDSYIVPLSIVVLTLLFIIQKHGTGSVGKLFAPVMLIWFLTLGVLGARSIIANPEVLQALNPMYAVRFFIEYKAVSFFALGAVVLAITGVEALYADMGHFGKFPIRLAWFTVVLPSLVLNYFGQGALLLKNPEAIKNPFFLLAPDWALIPLMILATLATIIASQAVISGVFSLTRQAVRLGYLPPMRIVHTSDMESGQIYIPAINWMLYIAVVIVIVSFEHSSNLAAAYGIAVTGTMVITSILFCTVAVKNWLWNRYLAWVLLAGLLVIDVPMFLANVVKILSGGWLPLALGMVMFIIMTTWKSERFRLLRRLHEHGNSLDAMIASLEKSPPTRVPGTAVYFSRATRVIPFALLHNLKHNKILHERVVLLTMRTEDAPYVLNARRVTVEQLSPTFWRVIANYGWRETPDVEEVFQRCWQDGLTCQMMETSFFMSNESLIIGERPWYLRLRGKLFMMLSRNALRAADQFEIPPNRLIELGIQVEI.

12 helical membrane-spanning segments follow: residues 9-29 (LPAV…TSPL), 49-69 (VFGF…LKYL), 101-121 (VLVI…VITP), 137-157 (PSMD…LFII), 165-185 (VGKL…VLGA), 212-232 (AVSF…EALY), 247-267 (WFTV…ALLL), 279-299 (LLAP…ATII), 337-357 (IYIP…IVSF), 363-383 (LAAA…ILFC), 397-417 (AWVL…ANVV), and 419-439 (ILSG…IMTT).

The protein belongs to the HAK/KUP transporter (TC 2.A.72) family.

It is found in the cell inner membrane. It carries out the reaction K(+)(in) + H(+)(in) = K(+)(out) + H(+)(out). Responsible for the low-affinity transport of potassium into the cell. Likely operates as a K(+):H(+) symporter. The protein is Low affinity potassium transport system protein Kup of Pectobacterium carotovorum subsp. carotovorum (strain PC1).